A 192-amino-acid polypeptide reads, in one-letter code: Pyridoxal 5'-phosphate synthase subunit PdxT (192 aa).

L-glutamine is bound at residue Gly53–Ser55. Cys82 serves as the catalytic Nucleophile. L-glutamine contacts are provided by residues Arg109 and Ile137–Arg138. Catalysis depends on charge relay system residues His173 and Glu175.

This sequence belongs to the glutaminase PdxT/SNO family. In terms of assembly, in the presence of PdxS, forms a dodecamer of heterodimers. Only shows activity in the heterodimer.

The enzyme catalyses aldehydo-D-ribose 5-phosphate + D-glyceraldehyde 3-phosphate + L-glutamine = pyridoxal 5'-phosphate + L-glutamate + phosphate + 3 H2O + H(+). It carries out the reaction L-glutamine + H2O = L-glutamate + NH4(+). It participates in cofactor biosynthesis; pyridoxal 5'-phosphate biosynthesis. Functionally, catalyzes the hydrolysis of glutamine to glutamate and ammonia as part of the biosynthesis of pyridoxal 5'-phosphate. The resulting ammonia molecule is channeled to the active site of PdxS. The polypeptide is Pyridoxal 5'-phosphate synthase subunit PdxT (Methanoculleus marisnigri (strain ATCC 35101 / DSM 1498 / JR1)).